The primary structure comprises 472 residues: Spliceosome-associated protein CWC27 homolog (472 aa).

Residue serine 2 is modified to N-acetylserine. Positions 11 to 166 (TNGKVLLKTT…NPHKIKSCEV (156 aa)) constitute a PPIase cyclophilin-type domain. 2 N-linked (GlcNAc...) asparagine glycosylation sites follow: asparagine 109 and asparagine 201. Residues 206–230 (SFGEEAEEEEEEVNRVSQSMKGKSK) are a coiled coil. Disordered regions lie at residues 206 to 386 (SFGE…DQTL) and 398 to 472 (QAIA…KERR). Over residues 231-241 (SSHDLLKDDPH) the composition is skewed to basic and acidic residues. Over residues 257–268 (DLVDDGEDESAE) the composition is skewed to acidic residues. 3 stretches are compositionally biased toward basic and acidic residues: residues 269–286 (HDEY…ERIA), 304–347 (EVEK…KRSE), and 359–371 (EYRR…EALR). The stretch at 306–377 (EKKSVSRSEE…EALRKQQSKK (72 aa)) forms a coiled coil. Serine 346 is modified (phosphoserine). A compositionally biased stretch (acidic residues) spans 404–418 (PENDIPETEVEDDEG). 2 stretches are compositionally biased toward basic and acidic residues: residues 425-437 (QFED…KDAS) and 457-472 (RREE…KERR).

The protein belongs to the cyclophilin-type PPIase family. As to quaternary structure, part of the activated spliceosome B/catalytic step 1 spliceosome, one of the forms of the spliceosome which has a well-formed active site but still cannot catalyze the branching reaction and is composed at least of 52 proteins, the U2, U5 and U6 snRNAs and the pre-mRNA. Recruited during early steps of activated spliceosome B maturation, it is probably one of the first proteins released from this complex as he matures to the spliceosome C complex. Component of the minor spliceosome, which splices U12-type introns.

It is found in the nucleus. In terms of biological role, as part of the spliceosome, plays a role in pre-mRNA splicing. Probable inactive PPIase with no peptidyl-prolyl cis-trans isomerase activity. As a component of the minor spliceosome, involved in the splicing of U12-type introns in pre-mRNAs. In Homo sapiens (Human), this protein is Spliceosome-associated protein CWC27 homolog.